A 239-amino-acid polypeptide reads, in one-letter code: Protein G1-like8 (239 aa).

Disordered regions lie at residues 1-35 (MEGG…RYES) and 149-239 (KARG…ATRV). Over residues 9 to 29 (DAQAQAQPVAQAPPAMQPMQQ) the composition is skewed to low complexity. The ALOG domain maps to 32-159 (RYESQKRRDW…ARGIPYEKKK (128 aa)). The short motif at 157 to 161 (KKKRK) is the Nuclear localization signal element. Pro residues predominate over residues 167 to 178 (QPPPQPPLPPQH). 2 stretches are compositionally biased toward low complexity: residues 179-215 (QPGA…ATSQ) and 223-239 (TTTT…ATRV).

It belongs to the plant homeotic and developmental regulators ALOG protein family.

It is found in the nucleus. Probable transcription regulator that acts as a developmental regulator by promoting cell growth in response to light. This Oryza sativa subsp. indica (Rice) protein is Protein G1-like8.